The following is an 86-amino-acid chain: Triosephosphate isomerase (86 aa).

E62 acts as the Proton acceptor in catalysis.

It belongs to the triosephosphate isomerase family. Homodimer.

It carries out the reaction D-glyceraldehyde 3-phosphate = dihydroxyacetone phosphate. It functions in the pathway carbohydrate biosynthesis; gluconeogenesis. It participates in carbohydrate degradation; glycolysis; D-glyceraldehyde 3-phosphate from glycerone phosphate: step 1/1. This chain is Triosephosphate isomerase, found in Platanus orientalis (Oriental plane-tree).